The chain runs to 408 residues: UDP-N-acetylglucosamine--dolichyl-phosphate N-acetylglucosaminephosphotransferase (408 aa).

Residues 1-10 (MWAFPELPLP) lie on the Lumenal side of the membrane. Residues 11-38 (LLVNLFGSLLGFVATVTLIPAFRSHFIA) traverse the membrane as a helical segment. Topologically, residues 39-58 (ARLCGQDLNKLSRQQIPESQ) are cytoplasmic. UDP-N-acetyl-alpha-D-glucosamine-binding positions include 44-46 (QDL) and E56. A helical membrane pass occupies residues 59–78 (GVICGAVFLIILFCFIPFPF). At 79-91 (LNCFVEEQCKAFP) the chain is on the lumenal side. Residues 92–118 (HHEFVALIGALLAICCMIFLGFADDVL) form a helical membrane-spanning segment. Over 119 to 121 (NLP) the chain is Cytoplasmic. Residues 122–143 (WRHKLLLPTAASLPLLMVYFTN) traverse the membrane as a helical segment. A dolichyl phosphate-binding site is contributed by K125. Topologically, residues 144–166 (FGNTTIVVPKPFRWILGLHLDLG) are lumenal. N-linked (GlcNAc...) asparagine glycosylation is present at N146. Residues 167-186 (ILYYVYMGLLAVFCTNAINI) form a helical membrane-spanning segment. 178-186 (VFCTNAINI) is a dolichyl phosphate binding site. Residue N185 participates in Mg(2+) binding. The Cytoplasmic segment spans residues 187–192 (LAGING). N191 contributes to the UDP-N-acetyl-alpha-D-glucosamine binding site. Residues 193 to 213 (LEAGQSLVISASIIVFNLVEL) form a helical membrane-spanning segment. Residues 214–218 (EGDYR) are Lumenal-facing. The helical transmembrane segment at 219-242 (DDHVFSLYFMIPFFFTTLGLLYHN) threads the bilayer. Over 243–250 (WYPSQVFV) the chain is Cytoplasmic. A helical transmembrane segment spans residues 251 to 269 (GDTFCYFAGMTFAVVGILG). D252 is a binding site for Mg(2+). Residues 270 to 271 (HF) are Lumenal-facing. The chain crosses the membrane as a helical span at residues 272–293 (SKTMLLFFIPQVFNFLYSLPQL). Residues 294-375 (LHAIPCPRHR…LLLKIFGPIH (82 aa)) are Cytoplasmic-facing. 301–303 (RHR) is a binding site for UDP-N-acetyl-alpha-D-glucosamine. Residues 376 to 400 (ERNLTLLLLLLQILSSAVTFSIRYQ) traverse the membrane as a helical segment. Topologically, residues 401–408 (LVRLFYDV) are lumenal.

The protein belongs to the glycosyltransferase 4 family. In terms of assembly, homodimer. It depends on Mg(2+) as a cofactor.

The protein resides in the endoplasmic reticulum membrane. The catalysed reaction is a di-trans,poly-cis-dolichyl phosphate + UDP-N-acetyl-alpha-D-glucosamine = an N-acetyl-alpha-D-glucosaminyl-diphospho-di-trans,poly-cis-dolichol + UMP. It functions in the pathway protein modification; protein glycosylation. With respect to regulation, inhibited by natural nucleoside antibiotic tunicamycin, which acts as a structural analog and competitor of UDP-GlcNAc. Its function is as follows. UDP-N-acetylglucosamine--dolichyl-phosphate N-acetylglucosaminephosphotransferase that operates in the biosynthetic pathway of dolichol-linked oligosaccharides, the glycan precursors employed in protein asparagine (N)-glycosylation. The assembly of dolichol-linked oligosaccharides begins on the cytosolic side of the endoplasmic reticulum membrane and finishes in its lumen. The sequential addition of sugars to dolichol pyrophosphate produces dolichol-linked oligosaccharides containing fourteen sugars, including two GlcNAcs, nine mannoses and three glucoses. Once assembled, the oligosaccharide is transferred from the lipid to nascent proteins by oligosaccharyltransferases. Catalyzes the initial step of dolichol-linked oligosaccharide biosynthesis, transfering GlcNAc-1-P from cytosolic UDP-GlcNAc onto the carrier lipid dolichyl phosphate (P-dolichol), yielding GlcNAc-P-P-dolichol embedded in the cytoplasmic leaflet of the endoplasmic reticulum membrane. The protein is UDP-N-acetylglucosamine--dolichyl-phosphate N-acetylglucosaminephosphotransferase (DPAGT1) of Cricetulus longicaudatus (Long-tailed dwarf hamster).